A 950-amino-acid polypeptide reads, in one-letter code: ABC transporter A family member 9 (950 aa).

6 helical membrane passes run 31-51, 223-243, 276-296, 308-328, 342-362, and 426-446; these read ATCL…SIEE, IISA…MFGF, WLIW…LFGM, FVLV…LAFA, VGFL…AGFP, and IWLV…DNII. Positions 520–765 constitute an ABC transporter domain; that stretch reads VQIHGLAKTY…FGTGFVATVS (246 aa). 566-573 provides a ligand contact to ATP; the sequence is GPNGAGKT.

It belongs to the ABC transporter superfamily. ABCA family. CPR flippase (TC 3.A.1.211) subfamily. Highly expressed in siliques. Detected in seedlings, rosette leaves, stems and flowers.

It is found in the endoplasmic reticulum membrane. Its function is as follows. Mediates the transport of acyl-CoAs and/or free fatty acids to the endoplasmic reticulum. Has no effect on the selectivity of fatty acid incorporation into triacylglycerol or further desaturation steps. The polypeptide is ABC transporter A family member 9 (ABCA9) (Arabidopsis thaliana (Mouse-ear cress)).